The primary structure comprises 218 residues: NADH dehydrogenase [ubiquinone] iron-sulfur protein 7, mitochondrial (218 aa).

The span at 34 to 48 (LPALSPSTSPTSYTR) shows a compositional bias: low complexity. The disordered stretch occupies residues 34 to 61 (LPALSPSTSPTSYTRPGPPSTSPPPPGL). Pro residues predominate over residues 49–60 (PGPPSTSPPPPG). [4Fe-4S] cluster-binding residues include Cys93, Cys94, Cys158, and Cys188.

Belongs to the complex I 20 kDa subunit family. As to quaternary structure, complex I is composed of at least 49 different subunits. This is a component of the iron-sulfur (IP) fragment of the enzyme. [4Fe-4S] cluster serves as cofactor.

It is found in the mitochondrion. It catalyses the reaction a ubiquinone + NADH + 5 H(+)(in) = a ubiquinol + NAD(+) + 4 H(+)(out). In terms of biological role, core subunit of the mitochondrial membrane respiratory chain NADH dehydrogenase (Complex I) that is believed to belong to the minimal assembly required for catalysis. Complex I functions in the transfer of electrons from NADH to the respiratory chain. The immediate electron acceptor for the enzyme is believed to be ubiquinone. The chain is NADH dehydrogenase [ubiquinone] iron-sulfur protein 7, mitochondrial from Arabidopsis thaliana (Mouse-ear cress).